We begin with the raw amino-acid sequence, 276 residues long: Ribonuclease 3 (276 aa).

The 132-residue stretch at 30-161 (LTAFIRSLFK…LTGAIYLDRG (132 aa)) folds into the RNase III domain. Glu-74 is a Mg(2+) binding site. The active site involves Asp-78. Asp-147 and Glu-150 together coordinate Mg(2+). Glu-150 is a catalytic residue. The DRBM domain occupies 188 to 257 (NHKSRLIEHT…AEEAMGALER (70 aa)).

Belongs to the ribonuclease III family. Homodimer. Mg(2+) serves as cofactor.

It localises to the cytoplasm. The catalysed reaction is Endonucleolytic cleavage to 5'-phosphomonoester.. Digests double-stranded RNA. Involved in the processing of primary rRNA transcript to yield the immediate precursors to the large and small rRNAs (23S and 16S). Processes some mRNAs, and tRNAs when they are encoded in the rRNA operon. Processes pre-crRNA and tracrRNA of type II CRISPR loci if present in the organism. The chain is Ribonuclease 3 from Chlorobium luteolum (strain DSM 273 / BCRC 81028 / 2530) (Pelodictyon luteolum).